The primary structure comprises 671 residues: DNA ligase (671 aa).

NAD(+)-binding positions include 32 to 36 (DAEYD), 81 to 82 (SL), and Glu-113. Catalysis depends on Lys-115, which acts as the N6-AMP-lysine intermediate. NAD(+) contacts are provided by Arg-136, Glu-173, Lys-290, and Lys-314. Positions 408, 411, 426, and 432 each coordinate Zn(2+). One can recognise a BRCT domain in the interval 593 to 671 (EIDSPFAGKT…EAEMLRLLGS (79 aa)).

Belongs to the NAD-dependent DNA ligase family. LigA subfamily. Mg(2+) serves as cofactor. It depends on Mn(2+) as a cofactor.

It carries out the reaction NAD(+) + (deoxyribonucleotide)n-3'-hydroxyl + 5'-phospho-(deoxyribonucleotide)m = (deoxyribonucleotide)n+m + AMP + beta-nicotinamide D-nucleotide.. Functionally, DNA ligase that catalyzes the formation of phosphodiester linkages between 5'-phosphoryl and 3'-hydroxyl groups in double-stranded DNA using NAD as a coenzyme and as the energy source for the reaction. It is essential for DNA replication and repair of damaged DNA. The protein is DNA ligase of Escherichia coli (strain SE11).